Here is a 475-residue protein sequence, read N- to C-terminus: Ribulose bisphosphate carboxylase large chain (475 aa).

The propeptide occupies 1–2; it reads MS. N-acetylproline is present on P3. K14 is subject to N6,N6,N6-trimethyllysine. Positions 123 and 173 each coordinate substrate. The active-site Proton acceptor is K175. Substrate is bound at residue K177. Mg(2+)-binding residues include K201, D203, and E204. K201 is modified (N6-carboxylysine). H294 serves as the catalytic Proton acceptor. R295, H327, and S379 together coordinate substrate.

This sequence belongs to the RuBisCO large chain family. Type I subfamily. In terms of assembly, heterohexadecamer of 8 large chains and 8 small chains; disulfide-linked. The disulfide link is formed within the large subunit homodimers. Mg(2+) serves as cofactor. In terms of processing, the disulfide bond which can form in the large chain dimeric partners within the hexadecamer appears to be associated with oxidative stress and protein turnover.

Its subcellular location is the plastid. It is found in the chloroplast. It catalyses the reaction 2 (2R)-3-phosphoglycerate + 2 H(+) = D-ribulose 1,5-bisphosphate + CO2 + H2O. It carries out the reaction D-ribulose 1,5-bisphosphate + O2 = 2-phosphoglycolate + (2R)-3-phosphoglycerate + 2 H(+). In terms of biological role, ruBisCO catalyzes two reactions: the carboxylation of D-ribulose 1,5-bisphosphate, the primary event in carbon dioxide fixation, as well as the oxidative fragmentation of the pentose substrate in the photorespiration process. Both reactions occur simultaneously and in competition at the same active site. The sequence is that of Ribulose bisphosphate carboxylase large chain from Lotus japonicus (Lotus corniculatus var. japonicus).